Consider the following 413-residue polypeptide: Probable inactive allantoicase (413 aa).

The protein belongs to the allantoicase family.

Functionally, the function of this enzyme is unclear as allantoicase activity is not known to exist in mammals. The polypeptide is Probable inactive allantoicase (Rattus norvegicus (Rat)).